The sequence spans 93 residues: Alpha-defensin 6/12 (93 aa).

An N-terminal signal peptide occupies residues Met1–Ala19. A propeptide spanning residues Asp20 to Arg60 is cleaved from the precursor. The interval Gln23–Leu54 is disordered. 3 cysteine pairs are disulfide-bonded: Cys64/Cys92, Cys66/Cys81, and Cys71/Cys91.

The protein belongs to the alpha-defensin family. As to expression, paneth cells of the small bowel.

It is found in the secreted. Its function is as follows. Has broad-spectrum antimicrobial properties. Has antibacterial activity against the Gram-positive bacterium L.monocytogenes EGD and the Gram-negative bacteria E.coli ML-35p and avirulent S.typhimurium 7953, but not against the mouse-virulent S.typhimurium 14028S. Probably contributes to the antimicrobial barrier function of the small bowel mucosa. The polypeptide is Alpha-defensin 6/12 (Defa6) (Mus musculus (Mouse)).